The primary structure comprises 225 residues: MTAPPSLQAKAVGIGMTSQRVRDRLVERLRECGIQDERVLSTIRIVPRHLFIDEALALRAYEDTALPIGHGQTISQPWVVARMTEAVMQVVPKKILEIGTGSGYQSAILASLGLEVYTIERIGKLLRQARKRFRQLGIKIRSKHDDGSTGWTEHAPYNAILVTAAAPTLIDTLIEQLAIGGRLVAPVGTASEQALVQLTRTIDGSITHEILEPVTFVSLLPGMLD.

Residue Ser-75 is part of the active site.

The protein belongs to the methyltransferase superfamily. L-isoaspartyl/D-aspartyl protein methyltransferase family.

Its subcellular location is the cytoplasm. It carries out the reaction [protein]-L-isoaspartate + S-adenosyl-L-methionine = [protein]-L-isoaspartate alpha-methyl ester + S-adenosyl-L-homocysteine. Functionally, catalyzes the methyl esterification of L-isoaspartyl residues in peptides and proteins that result from spontaneous decomposition of normal L-aspartyl and L-asparaginyl residues. It plays a role in the repair and/or degradation of damaged proteins. The chain is Protein-L-isoaspartate O-methyltransferase from Xylella fastidiosa (strain M23).